A 253-amino-acid chain; its full sequence is Indole-3-glycerol phosphate synthase (253 aa).

The protein belongs to the TrpC family.

The enzyme catalyses 1-(2-carboxyphenylamino)-1-deoxy-D-ribulose 5-phosphate + H(+) = (1S,2R)-1-C-(indol-3-yl)glycerol 3-phosphate + CO2 + H2O. It participates in amino-acid biosynthesis; L-tryptophan biosynthesis; L-tryptophan from chorismate: step 4/5. The chain is Indole-3-glycerol phosphate synthase from Bacillus cereus (strain ATCC 14579 / DSM 31 / CCUG 7414 / JCM 2152 / NBRC 15305 / NCIMB 9373 / NCTC 2599 / NRRL B-3711).